Here is a 297-residue protein sequence, read N- to C-terminus: Iron-sulfur cluster assembly SufBD family protein ycf24 (297 aa).

The protein belongs to the iron-sulfur cluster assembly SufBD family.

It is found in the plastid. The protein localises to the chloroplast. The polypeptide is Iron-sulfur cluster assembly SufBD family protein ycf24 (ycf24) (Antithamnion sp. (Red alga)).